The primary structure comprises 110 residues: Phosphoribosyl-AMP cyclohydrolase (110 aa).

Mg(2+) is bound at residue Asp74. Cys75 is a binding site for Zn(2+). Mg(2+) contacts are provided by Asp76 and Asp78. Positions 91 and 98 each coordinate Zn(2+).

The protein belongs to the PRA-CH family. Homodimer. It depends on Mg(2+) as a cofactor. Requires Zn(2+) as cofactor.

The protein localises to the cytoplasm. It catalyses the reaction 1-(5-phospho-beta-D-ribosyl)-5'-AMP + H2O = 1-(5-phospho-beta-D-ribosyl)-5-[(5-phospho-beta-D-ribosylamino)methylideneamino]imidazole-4-carboxamide. Its pathway is amino-acid biosynthesis; L-histidine biosynthesis; L-histidine from 5-phospho-alpha-D-ribose 1-diphosphate: step 3/9. Catalyzes the hydrolysis of the adenine ring of phosphoribosyl-AMP. The sequence is that of Phosphoribosyl-AMP cyclohydrolase from Lacticaseibacillus casei (strain BL23) (Lactobacillus casei).